The sequence spans 282 residues: Biotin synthase (282 aa).

The 228-residue stretch at 1–228 (MQEIFLCSIS…NARLMVAGGR (228 aa)) folds into the Radical SAM core domain. The [4Fe-4S] cluster site is built by C17, C21, and C24. C61, C96, C154, and R221 together coordinate [2Fe-2S] cluster.

It belongs to the radical SAM superfamily. Biotin synthase family. As to quaternary structure, homodimer. [4Fe-4S] cluster serves as cofactor. Requires [2Fe-2S] cluster as cofactor.

The catalysed reaction is (4R,5S)-dethiobiotin + (sulfur carrier)-SH + 2 reduced [2Fe-2S]-[ferredoxin] + 2 S-adenosyl-L-methionine = (sulfur carrier)-H + biotin + 2 5'-deoxyadenosine + 2 L-methionine + 2 oxidized [2Fe-2S]-[ferredoxin]. Its pathway is cofactor biosynthesis; biotin biosynthesis; biotin from 7,8-diaminononanoate: step 2/2. Its function is as follows. Catalyzes the conversion of dethiobiotin (DTB) to biotin by the insertion of a sulfur atom into dethiobiotin via a radical-based mechanism. The polypeptide is Biotin synthase (Helicobacter pylori (strain ATCC 700392 / 26695) (Campylobacter pylori)).